The primary structure comprises 1299 residues: DNA-directed RNA polymerase subunit beta' (1299 aa).

4 residues coordinate Zn(2+): Cys-60, Cys-62, Cys-75, and Cys-78. A disordered region spans residues Gly-188–Arg-209. Asp-535, Asp-537, and Asp-539 together coordinate Mg(2+). Zn(2+) contacts are provided by Cys-882, Cys-959, Cys-966, and Cys-969.

This sequence belongs to the RNA polymerase beta' chain family. The RNAP catalytic core consists of 2 alpha, 1 beta, 1 beta' and 1 omega subunit. When a sigma factor is associated with the core the holoenzyme is formed, which can initiate transcription. It depends on Mg(2+) as a cofactor. Requires Zn(2+) as cofactor.

The catalysed reaction is RNA(n) + a ribonucleoside 5'-triphosphate = RNA(n+1) + diphosphate. DNA-dependent RNA polymerase catalyzes the transcription of DNA into RNA using the four ribonucleoside triphosphates as substrates. The polypeptide is DNA-directed RNA polymerase subunit beta' (Clavibacter michiganensis subsp. michiganensis (strain NCPPB 382)).